Reading from the N-terminus, the 503-residue chain is Puromycin resistance protein pur8 (503 aa).

Residues 1-24 (MARKPDISAVPVESAACQGPDPRR) are Cytoplasmic-facing. Residues 25–45 (WWGLVVILAAQLLVVLDGTVV) traverse the membrane as a helical segment. At 46 to 64 (NIALPSVQRDLGMSDTSRQ) the chain is on the extracellular side. Residues 65-85 (WVITAYTLAFGGLLLLGGRVA) traverse the membrane as a helical segment. Over 86 to 92 (DAFGRRR) the chain is Cytoplasmic. Residues 93 to 113 (IFAVGILGFGLASLLGGAAPD) form a helical membrane-spanning segment. The Extracellular segment spans residues 114 to 122 (PGTLFLARA). Residues 123-143 (LQGVFAAALAPAALALINTLF) form a helical membrane-spanning segment. Topologically, residues 144 to 152 (TEPGERGKA) are cytoplasmic. Residues 153–173 (FGVYGAVSGGGAAVGLLAGGL) traverse the membrane as a helical segment. The Extracellular portion of the chain corresponds to 174–181 (LTEYLDWR). Residues 182–202 (WCLYVNAPVALLALLGCRLLP) form a helical membrane-spanning segment. Topologically, residues 203–212 (RDRRTGRAVR) are cytoplasmic. Residues 213-233 (LDLPGTLLGCGGLVAIVYAFA) traverse the membrane as a helical segment. The Extracellular segment spans residues 234–241 (EAESGWGD). Residues 242 to 262 (PLVVRLLVLGVLMLVAFALVE) traverse the membrane as a helical segment. Over 263–280 (RRVQDPLLPPGVVAHRVR) the chain is Cytoplasmic. The chain crosses the membrane as a helical span at residues 281 to 301 (GGSFLVVGLPQIGLFGLFLFL). The Extracellular portion of the chain corresponds to 302–313 (TYYLQGILDYSP). The helical transmembrane segment at 314–334 (VLTGVAFLPLGLGIAVGSSLI) threads the bilayer. The Cytoplasmic portion of the chain corresponds to 335–346 (AARLLPRTRPRT). The helical transmembrane segment at 347-367 (LIVGALLAAAAGMALLTRLEP) threads the bilayer. The Extracellular segment spans residues 368 to 371 (DTPQ). Residues 372 to 392 (VYLTHLLPAQILIGLGIGCMM) traverse the membrane as a helical segment. Residues 393–422 (MPAMHTATARVAPHEAGAAAAVVNSAQQVG) lie on the Cytoplasmic side of the membrane. A helical transmembrane segment spans residues 423 to 443 (GALGVALLNTVSTGATAAYLA). Residues 444-461 (DHGTSPAATVDGTVHGYT) lie on the Extracellular side of the membrane. A helical membrane pass occupies residues 462-482 (VAIAFAVGVLLLTAVLAWVLI). Residues 483–503 (DSRTEAADETGSASVTPARPR) are Cytoplasmic-facing.

It belongs to the major facilitator superfamily. EmrB family.

It localises to the cell membrane. In terms of biological role, may be involved in active puromycin efflux energized by a proton-dependent electrochemical gradient. In addition, it could be implicated in secreting N-acetylpuromycin, the last intermediate of the puromycin biosynthesis pathway, to the environment. The chain is Puromycin resistance protein pur8 (pur8) from Streptomyces alboniger.